Reading from the N-terminus, the 1021-residue chain is Probable LRR receptor-like serine/threonine-protein kinase RFK1 (1021 aa).

An N-terminal signal peptide occupies residues 1–39; that stretch reads MISLYQILAEKKKKKKNDLNIFAFSVFAIICFKFYSVNA. At 41 to 625 the chain is on the extracellular side; that stretch reads KLPQQEVDAL…PKTGMSPGAY (585 aa). N96 carries N-linked (GlcNAc...) asparagine glycosylation. 2 LRR repeats span residues 99–122 and 123–146; these read DCHV…IVKL and PYLR…WASS. 3 N-linked (GlcNAc...) asparagine glycosylation sites follow: N136, N147, and N168. LRR repeat units lie at residues 148 to 168, 169 to 192, 193 to 216, 218 to 240, and 241 to 266; these read LTFI…EFGN, SSLT…LGNL, VHLK…LARL, NMTD…IQNW, and KQLE…VLSN. An N-linked (GlcNAc...) asparagine glycan is attached at N218. N287 and N300 each carry an N-linked (GlcNAc...) asparagine glycan. LRR repeat units lie at residues 288–312, 313–336, 338–359, and 361–381; these read VTGL…LSHL, KELE…AQAE, LRFI…LLRD, and ITVD…RACR. Residues N486 and N512 are each glycosylated (N-linked (GlcNAc...) asparagine). A helical transmembrane segment spans residues 626 to 646; that stretch reads IAIGIGAPCLIIFILGFLWIC. Topologically, residues 647–1021 are cytoplasmic; it reads GCLPRCGRQR…QERKKEESRP (375 aa). At T670 the chain carries Phosphothreonine. In terms of domain architecture, Protein kinase spans 681 to 956; it reads FNPTNKIGEG…EVVAMLEGLY (276 aa). ATP-binding positions include 687-695 and K709; that span reads IGEGGFGAV. Y754 carries the post-translational modification Phosphotyrosine. The active-site Proton acceptor is D807. S840 is modified (phosphoserine). T841 and T846 each carry phosphothreonine. Phosphotyrosine is present on Y854. The tract at residues 985-1021 is disordered; it reads ENNSKTQCSVKSYPSSSSTSSGAGQAVQERKKEESRP. Residues 993–1005 are compositionally biased toward low complexity; it reads SVKSYPSSSSTSS. Residues 1012–1021 show a composition bias toward basic and acidic residues; that stretch reads QERKKEESRP.

Belongs to the protein kinase superfamily. Ser/Thr protein kinase family. Mostly expressed in flower buds, especially in stamens.

Its subcellular location is the membrane. The enzyme catalyses L-seryl-[protein] + ATP = O-phospho-L-seryl-[protein] + ADP + H(+). It catalyses the reaction L-threonyl-[protein] + ATP = O-phospho-L-threonyl-[protein] + ADP + H(+). This Arabidopsis thaliana (Mouse-ear cress) protein is Probable LRR receptor-like serine/threonine-protein kinase RFK1 (RKF1).